The chain runs to 224 residues: Non-structural protein V (224 aa).

Residues 54-65 (QKNIQHPTASHQ) show a composition bias toward polar residues. Disordered regions lie at residues 54-96 (QKNI…DPEP) and 150-171 (TEFK…GGHR). The Zn(2+) site is built by histidine 170, cysteine 189, cysteine 193, cysteine 205, cysteine 207, cysteine 210, cysteine 214, and cysteine 217.

The protein belongs to the paramyxoviruses V protein family. In terms of assembly, interacts with host IFIH1/MDA5 and DHX58/LGP2. Forms with host DDB1, CUL4A, STAT1, STAT2 and STAT3 the mumps virus V-dependent complex (VDC).

The protein resides in the virion. The protein localises to the host cytoplasm. Plays an essential role in the inhibition of host immune response. Prevents the establishment of cellular antiviral state by blocking interferon-alpha/beta (IFN-alpha/beta) production and signaling pathway. Interacts with host IFIH1/MDA5 and DHX58/LGP2 to inhibit the transduction pathway involved in the activation of IFN-beta promoter, thus protecting the virus against cell antiviral state. Blocks the type I and II interferon signaling pathways by interacting with host STAT1, STAT2 and STAT3, and mediating their ubiquitination and subsequent proteasomal degradation. This chain is Non-structural protein V, found in Mumps virus (strain SBL) (MuV).